Reading from the N-terminus, the 537-residue chain is O-phosphoserine--tRNA(Cys) ligase (537 aa).

Substrate contacts are provided by residues 186–188, 231–233, 273–274, and Asn317; these read HMT, SAS, and YY.

The protein belongs to the class-II aminoacyl-tRNA synthetase family. O-phosphoseryl-tRNA(Cys) synthetase subfamily. As to quaternary structure, homotetramer. Interacts with SepCysS.

It catalyses the reaction tRNA(Cys) + O-phospho-L-serine + ATP = O-phospho-L-seryl-tRNA(Cys) + AMP + diphosphate. Its function is as follows. Catalyzes the attachment of O-phosphoserine (Sep) to tRNA(Cys). The chain is O-phosphoserine--tRNA(Cys) ligase from Methanococcus maripaludis (strain C7 / ATCC BAA-1331).